The chain runs to 184 residues: Peptide methionine sulfoxide reductase (184 aa).

Ser-58 carries the post-translational modification Phosphoserine.

This sequence belongs to the MsrA Met sulfoxide reductase family.

It catalyses the reaction L-methionyl-[protein] + [thioredoxin]-disulfide + H2O = L-methionyl-(S)-S-oxide-[protein] + [thioredoxin]-dithiol. The enzyme catalyses [thioredoxin]-disulfide + L-methionine + H2O = L-methionine (S)-S-oxide + [thioredoxin]-dithiol. Has an important function as a repair enzyme for proteins that have been inactivated by oxidation. Catalyzes the reversible oxidation-reduction of methionine sulfoxide in proteins to methionine. Also able to reduce dimethyl sulfoxide (DMSO) as well, with DMS as the product. The polypeptide is Peptide methionine sulfoxide reductase (MXR1) (Saccharomyces cerevisiae (strain ATCC 204508 / S288c) (Baker's yeast)).